The primary structure comprises 234 residues: Opacity protein opA51 (234 aa).

Alanine 1 is a signal peptide.

The protein belongs to the opacity porin family.

Its subcellular location is the cell outer membrane. Its function is as follows. Implicated in a number of adherence functions. OPA proteins are implicated in pathogenesis and are subject to phase variation. The polypeptide is Opacity protein opA51 (opaB) (Neisseria gonorrhoeae).